The sequence spans 391 residues: Chorismate synthase (391 aa).

R48 contacts NADP(+). FMN-binding positions include 126–128 (RAS), G286, 301–305 (KPTSS), and R328.

The protein belongs to the chorismate synthase family. FMNH2 is required as a cofactor.

It catalyses the reaction 5-O-(1-carboxyvinyl)-3-phosphoshikimate = chorismate + phosphate. The protein operates within metabolic intermediate biosynthesis; chorismate biosynthesis; chorismate from D-erythrose 4-phosphate and phosphoenolpyruvate: step 7/7. Functionally, catalyzes the anti-1,4-elimination of the C-3 phosphate and the C-6 proR hydrogen from 5-enolpyruvylshikimate-3-phosphate (EPSP) to yield chorismate, which is the branch point compound that serves as the starting substrate for the three terminal pathways of aromatic amino acid biosynthesis. This reaction introduces a second double bond into the aromatic ring system. This is Chorismate synthase from Saccharolobus solfataricus (strain ATCC 35092 / DSM 1617 / JCM 11322 / P2) (Sulfolobus solfataricus).